Here is a 238-residue protein sequence, read N- to C-terminus: Riboflavin-binding protein (238 aa).

A signal peptide spans 1–17 (MLRFAITLFAVITSSTC). Pyrrolidone carboxylic acid is present on Gln-18. 9 cysteine pairs are disulfide-bonded: Cys-22–Cys-49, Cys-41–Cys-90, Cys-50–Cys-94, Cys-74–Cys-155, Cys-81–Cys-127, Cys-116–Cys-186, Cys-120–Cys-169, Cys-133–Cys-151, and Cys-184–Cys-219. Asn-53 carries N-linked (GlcNAc...) asparagine glycosylation. A glycan (N-linked (GlcNAc...) asparagine) is linked at Asn-164. Ser-204, Ser-205, Ser-208, Ser-209, Ser-210, Ser-212, Ser-213, and Ser-214 each carry phosphoserine.

Belongs to the folate receptor family. Post-translationally, plasma and yolk RBPS have the same carbohydrate components, whereas egg-white RBP has a different, ovomucoid-type carbohydrate chain. In terms of processing, plasma RBP has the same C-terminal sequence as the egg-white RBP, which suggests that the C-terminal residues are cleaved off upon incorporation into the oocyte. Yolk RBP is synthesized in the liver; egg-white RBP is synthesized in the oviduct.

Its function is as follows. Required for the transport of riboflavin to the developing oocyte. This chain is Riboflavin-binding protein, found in Gallus gallus (Chicken).